Reading from the N-terminus, the 554-residue chain is Dihydroxy-acid dehydratase (554 aa).

Cys-48 is a binding site for [2Fe-2S] cluster. Asp-80 lines the Mg(2+) pocket. Cys-121 contacts [2Fe-2S] cluster. Asp-122 and Lys-123 together coordinate Mg(2+). Lys-123 carries the post-translational modification N6-carboxylysine. Cys-193 lines the [2Fe-2S] cluster pocket. Glu-444 is a Mg(2+) binding site. Residue Ser-470 is the Proton acceptor of the active site.

This sequence belongs to the IlvD/Edd family. In terms of assembly, homodimer. Requires [2Fe-2S] cluster as cofactor. The cofactor is Mg(2+).

The catalysed reaction is (2R)-2,3-dihydroxy-3-methylbutanoate = 3-methyl-2-oxobutanoate + H2O. It carries out the reaction (2R,3R)-2,3-dihydroxy-3-methylpentanoate = (S)-3-methyl-2-oxopentanoate + H2O. It participates in amino-acid biosynthesis; L-isoleucine biosynthesis; L-isoleucine from 2-oxobutanoate: step 3/4. Its pathway is amino-acid biosynthesis; L-valine biosynthesis; L-valine from pyruvate: step 3/4. In terms of biological role, functions in the biosynthesis of branched-chain amino acids. Catalyzes the dehydration of (2R,3R)-2,3-dihydroxy-3-methylpentanoate (2,3-dihydroxy-3-methylvalerate) into 2-oxo-3-methylpentanoate (2-oxo-3-methylvalerate) and of (2R)-2,3-dihydroxy-3-methylbutanoate (2,3-dihydroxyisovalerate) into 2-oxo-3-methylbutanoate (2-oxoisovalerate), the penultimate precursor to L-isoleucine and L-valine, respectively. This is Dihydroxy-acid dehydratase from Tremblaya princeps.